Reading from the N-terminus, the 189-residue chain is UPF0340 protein EF_1967 (189 aa).

Belongs to the UPF0340 family.

The sequence is that of UPF0340 protein EF_1967 from Enterococcus faecalis (strain ATCC 700802 / V583).